Reading from the N-terminus, the 369-residue chain is Homoserine O-succinyltransferase (369 aa).

A disordered region spans residues 1–21 (MVRIVPSARRTRAPAKLDGRS). The AB hydrolase-1 domain maps to 86–350 (VVFVAGGISA…PFGHDAFLKE (265 aa)). The important for substrate specificity stretch occupies residues 92-95 (GISA). The active-site Nucleophile is Ser-172. Arg-233 is a substrate binding site. Catalysis depends on residues Asp-314 and His-344. A substrate-binding site is contributed by Asp-345.

The protein belongs to the AB hydrolase superfamily. MetX family. As to quaternary structure, homodimer.

The protein resides in the cytoplasm. It catalyses the reaction L-homoserine + succinyl-CoA = O-succinyl-L-homoserine + CoA. The protein operates within amino-acid biosynthesis; L-methionine biosynthesis via de novo pathway; O-succinyl-L-homoserine from L-homoserine: step 1/1. Functionally, transfers a succinyl group from succinyl-CoA to L-homoserine, forming succinyl-L-homoserine. This Xanthomonas campestris pv. campestris (strain ATCC 33913 / DSM 3586 / NCPPB 528 / LMG 568 / P 25) protein is Homoserine O-succinyltransferase.